Consider the following 274-residue polypeptide: Phosphate import ATP-binding protein PstB (274 aa).

A compositionally biased stretch (polar residues) spans methionine 1–proline 11. Positions methionine 1–glutamine 21 are disordered. Positions valine 28–isoleucine 269 constitute an ABC transporter domain. An ATP-binding site is contributed by glycine 60–serine 67.

Belongs to the ABC transporter superfamily. Phosphate importer (TC 3.A.1.7) family. The complex is composed of two ATP-binding proteins (PstB), two transmembrane proteins (PstC and PstA) and a solute-binding protein (PstS).

It localises to the cell inner membrane. The enzyme catalyses phosphate(out) + ATP + H2O = ADP + 2 phosphate(in) + H(+). Part of the ABC transporter complex PstSACB involved in phosphate import. Responsible for energy coupling to the transport system. The sequence is that of Phosphate import ATP-binding protein PstB from Rhodopseudomonas palustris (strain BisB5).